A 205-amino-acid polypeptide reads, in one-letter code: UPF0316 protein Cthe_2213 (205 aa).

The next 3 membrane-spanning stretches (helical) occupy residues 15–37 (LPLLIFFSRIIDVTIGTIRIIFV), 44–64 (LAPVLGFFEVLVWIMAISQIM), and 70–90 (FVCYFAYAAGFATGTFVGIII).

Belongs to the UPF0316 family.

Its subcellular location is the cell membrane. The polypeptide is UPF0316 protein Cthe_2213 (Acetivibrio thermocellus (strain ATCC 27405 / DSM 1237 / JCM 9322 / NBRC 103400 / NCIMB 10682 / NRRL B-4536 / VPI 7372) (Clostridium thermocellum)).